Here is a 179-residue protein sequence, read N- to C-terminus: Large ribosomal subunit protein uL5 (179 aa).

Belongs to the universal ribosomal protein uL5 family. In terms of assembly, part of the 50S ribosomal subunit; part of the 5S rRNA/L5/L18/L25 subcomplex. Contacts the 5S rRNA and the P site tRNA. Forms a bridge to the 30S subunit in the 70S ribosome.

In terms of biological role, this is one of the proteins that bind and probably mediate the attachment of the 5S RNA into the large ribosomal subunit, where it forms part of the central protuberance. In the 70S ribosome it contacts protein S13 of the 30S subunit (bridge B1b), connecting the 2 subunits; this bridge is implicated in subunit movement. Contacts the P site tRNA; the 5S rRNA and some of its associated proteins might help stabilize positioning of ribosome-bound tRNAs. The polypeptide is Large ribosomal subunit protein uL5 (Rickettsia typhi (strain ATCC VR-144 / Wilmington)).